Reading from the N-terminus, the 570-residue chain is Urease subunit alpha (570 aa).

The 439-residue stretch at 132 to 570 (GGFDSHIHYI…LPLAQRYFLF (439 aa)) folds into the Urease domain. 3 residues coordinate Ni(2+): histidine 137, histidine 139, and lysine 220. Lysine 220 is modified (N6-carboxylysine). Residue histidine 222 coordinates substrate. Ni(2+) contacts are provided by histidine 249 and histidine 275. Residue histidine 323 is the Proton donor of the active site. Aspartate 363 provides a ligand contact to Ni(2+).

This sequence belongs to the metallo-dependent hydrolases superfamily. Urease alpha subunit family. Heterotrimer of UreA (gamma), UreB (beta) and UreC (alpha) subunits. Three heterotrimers associate to form the active enzyme. Requires Ni cation as cofactor. In terms of processing, carboxylation allows a single lysine to coordinate two nickel ions.

Its subcellular location is the cytoplasm. The enzyme catalyses urea + 2 H2O + H(+) = hydrogencarbonate + 2 NH4(+). It participates in nitrogen metabolism; urea degradation; CO(2) and NH(3) from urea (urease route): step 1/1. The protein is Urease subunit alpha of Ruegeria sp. (strain TM1040) (Silicibacter sp.).